The primary structure comprises 530 residues: CTP synthase (530 aa).

Residues 1–267 form an amidoligase domain region; the sequence is MTKYVFVTGG…DDFVLNHFKM (267 aa). CTP is bound at residue Ser13. Ser13 lines the UTP pocket. 14 to 19 is an ATP binding site; it reads SLGKGI. Residue Tyr54 participates in L-glutamine binding. An ATP-binding site is contributed by Asp71. 2 residues coordinate Mg(2+): Asp71 and Glu141. CTP-binding positions include 148-150, 188-193, and Lys224; these read DIE and KTKPTQ. UTP is bound by residues 188–193 and Lys224; that span reads KTKPTQ. 240–242 contacts ATP; the sequence is RDA. A Glutamine amidotransferase type-1 domain is found at 292 to 530; sequence KIALVGKYIE…LFKAFIGATM (239 aa). L-glutamine is bound at residue Gly354. The Nucleophile; for glutamine hydrolysis role is filled by Cys381. L-glutamine contacts are provided by residues 382 to 385, Glu405, and Arg463; that span reads LGMQ. Catalysis depends on residues His508 and Glu510.

This sequence belongs to the CTP synthase family. Homotetramer.

It catalyses the reaction UTP + L-glutamine + ATP + H2O = CTP + L-glutamate + ADP + phosphate + 2 H(+). The catalysed reaction is L-glutamine + H2O = L-glutamate + NH4(+). The enzyme catalyses UTP + NH4(+) + ATP = CTP + ADP + phosphate + 2 H(+). Its pathway is pyrimidine metabolism; CTP biosynthesis via de novo pathway; CTP from UDP: step 2/2. Allosterically activated by GTP, when glutamine is the substrate; GTP has no effect on the reaction when ammonia is the substrate. The allosteric effector GTP functions by stabilizing the protein conformation that binds the tetrahedral intermediate(s) formed during glutamine hydrolysis. Inhibited by the product CTP, via allosteric rather than competitive inhibition. Catalyzes the ATP-dependent amination of UTP to CTP with either L-glutamine or ammonia as the source of nitrogen. Regulates intracellular CTP levels through interactions with the four ribonucleotide triphosphates. The chain is CTP synthase from Latilactobacillus sakei subsp. sakei (strain 23K) (Lactobacillus sakei subsp. sakei).